The chain runs to 470 residues: Argininosuccinate synthase (470 aa).

Residues 17–25 (AFSGGLDTS) and alanine 43 contribute to the ATP site. An L-citrulline-binding site is contributed by tyrosine 99. ATP is bound by residues glycine 129 and threonine 131. 3 residues coordinate L-aspartate: threonine 131, asparagine 135, and aspartate 136. Asparagine 135 contributes to the L-citrulline binding site. Aspartate 136 serves as a coordination point for ATP. 2 residues coordinate L-citrulline: arginine 139 and serine 192. Aspartate 194 is an ATP binding site. Threonine 201, glutamate 203, and glutamate 280 together coordinate L-citrulline. The interval 448 to 470 (IASRGESSGDELLDRAAMESGTD) is disordered.

This sequence belongs to the argininosuccinate synthase family. Type 2 subfamily. As to quaternary structure, homotetramer.

The protein resides in the cytoplasm. It carries out the reaction L-citrulline + L-aspartate + ATP = 2-(N(omega)-L-arginino)succinate + AMP + diphosphate + H(+). The protein operates within amino-acid biosynthesis; L-arginine biosynthesis; L-arginine from L-ornithine and carbamoyl phosphate: step 2/3. The protein is Argininosuccinate synthase of Kineococcus radiotolerans (strain ATCC BAA-149 / DSM 14245 / SRS30216).